Consider the following 89-residue polypeptide: UPF0297 protein SMU_2079c (89 aa).

This sequence belongs to the UPF0297 family.

This chain is UPF0297 protein SMU_2079c, found in Streptococcus mutans serotype c (strain ATCC 700610 / UA159).